An 863-amino-acid chain; its full sequence is DNA mismatch repair protein MutS (863 aa).

617–624 serves as a coordination point for ATP; sequence GPNMGGKS.

Belongs to the DNA mismatch repair MutS family.

In terms of biological role, this protein is involved in the repair of mismatches in DNA. It is possible that it carries out the mismatch recognition step. This protein has a weak ATPase activity. The chain is DNA mismatch repair protein MutS from Pseudomonas fluorescens (strain SBW25).